Here is a 577-residue protein sequence, read N- to C-terminus: Arginine--tRNA ligase (577 aa).

The 'HIGH' region signature appears at Pro122–His132.

Belongs to the class-I aminoacyl-tRNA synthetase family. In terms of assembly, monomer.

It localises to the cytoplasm. It carries out the reaction tRNA(Arg) + L-arginine + ATP = L-arginyl-tRNA(Arg) + AMP + diphosphate. The sequence is that of Arginine--tRNA ligase from Haemophilus influenzae (strain PittGG).